The chain runs to 485 residues: Cytosol non-specific dipeptidase (485 aa).

Position 76 (histidine 76) interacts with Zn(2+). Aspartate 78 is an active-site residue. Aspartate 115 serves as a coordination point for Zn(2+). Glutamate 145 serves as the catalytic Proton acceptor. Residues glutamate 146 and aspartate 169 each coordinate Zn(2+). N6-acetyllysine is present on lysine 296. Histidine 457 is a binding site for Zn(2+).

This sequence belongs to the peptidase M20C family. The cofactor is Zn(2+). Requires Co(2+) as cofactor.

The catalysed reaction is Hydrolysis of dipeptides, preferentially hydrophobic dipeptides including prolyl amino acids.. With respect to regulation, inhibited by metal chelators. Dipeptidase with broad substrate specificity. Requires dipeptide substrates with an unblocked N-terminus and the amino group in the alpha or beta position. Non-protein amino acids and proline are not accepted in the C-terminal position, whereas some dipeptide amides and formyl amino acids are hydrolyzed. Also shows cysteinylglycinase activity, which is sufficient for E.coli to utilize cysteinylglycine as a cysteine source. This is Cytosol non-specific dipeptidase (pepD) from Escherichia coli (strain K12).